The following is a 164-amino-acid chain: UPF0304 protein ECA3037 (164 aa).

It belongs to the UPF0304 family.

This chain is UPF0304 protein ECA3037, found in Pectobacterium atrosepticum (strain SCRI 1043 / ATCC BAA-672) (Erwinia carotovora subsp. atroseptica).